Reading from the N-terminus, the 91-residue chain is Small ribosomal subunit protein uS19 (91 aa).

Belongs to the universal ribosomal protein uS19 family.

Its function is as follows. Protein S19 forms a complex with S13 that binds strongly to the 16S ribosomal RNA. This Sulfurimonas denitrificans (strain ATCC 33889 / DSM 1251) (Thiomicrospira denitrificans (strain ATCC 33889 / DSM 1251)) protein is Small ribosomal subunit protein uS19.